The chain runs to 410 residues: Protein disulfide isomerase CRELD1 (410 aa).

Positions 1–29 (MGMSRRMFLTVYGSLWLLLLLSRPGVSKP) are cleaved as a signal peptide. The Extracellular segment spans residues 30-352 (QLCQTCQNLV…GLFDDITDDE (323 aa)). Residues 32-35 (CQTC) carry the CXXC motif. 4 disulfide bridges follow: Cys32-Cys35, Cys141-Cys155, Cys149-Cys167, and Cys169-Cys178. An EGF-like 1 domain is found at 139–179 (LSCPGGTEKPCSGNGQCNGDGTRFGTGVCDCYTSYGGPVCM). FU repeat units lie at residues 194 to 243 (HLVC…DHCK) and 254 to 301 (SYEC…ELPK). Residues 264 to 267 (CIGC) carry the CXXC motif. 4 disulfide bridges follow: Cys264-Cys267, Cys295-Cys309, Cys302-Cys318, and Cys320-Cys331. An EGF-like 2; calcium-binding domain is found at 291–332 (DVDECDSELPKCKGSHEECVNTEGSFTCVCEKDYSRIDGMCR). A helical transmembrane segment spans residues 353–373 (VVVLQQMFFGVVICALATLAA). Residue Lys374 is a topological domain, cytoplasmic. Residues 375–395 (GDMVFTAIFIGAVAAMAGYWL) form a helical membrane-spanning segment. At 396–410 (SEKGDRALDSFMKGR) the chain is on the extracellular side.

The protein belongs to the CRELD family.

It is found in the membrane. The enzyme catalyses Catalyzes the rearrangement of -S-S- bonds in proteins.. In terms of biological role, protein disulfide isomerase. Promotes the localization of acetylcholine receptors (AChRs) to the plasma membrane. This Xenopus tropicalis (Western clawed frog) protein is Protein disulfide isomerase CRELD1 (creld1).